A 982-amino-acid chain; its full sequence is Protein lin-10 (982 aa).

Polar residues predominate over residues 1 to 16 (MSSEAVAQATAATTSP). Disordered regions lie at residues 1–55 (MSSE…MIPP), 119–228 (QPAL…RTDS), 269–327 (TVAD…STVP), 432–511 (FAQQ…GTDD), and 525–593 (QREQ…SKET). The segment covering 33–44 (KGGGAGGGGGGE) has biased composition (gly residues). Over residues 119–134 (QPALQQPRPSSQASSS) the composition is skewed to low complexity. Composition is skewed to polar residues over residues 143–156 (RQTA…NVSP) and 169–190 (ETSG…SSDV). The span at 211-228 (GEEKSEEKRKLSGDRTDS) shows a compositional bias: basic and acidic residues. Over residues 301–318 (SLNQLRSSFNLPDDSTTV) the composition is skewed to polar residues. Low complexity-rich tracts occupy residues 432-445 (FAQQ…APTP) and 454-464 (PSTSSGPSGAL). Over residues 490–501 (NGTSTSTTNGAQ) the composition is skewed to polar residues. A compositionally biased stretch (low complexity) spans 539 to 550 (QEAATAAQEAAE). Over residues 577–593 (GAERRGSVDKKKNSKET) the composition is skewed to basic and acidic residues. Residues 604-788 (GVLFRARYLG…VLNSQELLGD (185 aa)) enclose the PID domain. 2 PDZ domains span residues 801 to 886 (EVVV…TVVS) and 892 to 968 (EVRI…MPTS).

As to quaternary structure, interacts (via N-terminus) with egl-9 isoform e (via catalytic domain); the interaction regulates its trafficking; the interaction is direct. Interacts with rab-6.2 (in GTP-bound form). Phosphorylated on multiple Ser and Thr residues by cdk-5 which regulates its localization. In terms of processing, may be hydroxylated by egl-9 isoform e on multiple Pro residues which may prevent phosphorylation by cdk-5. As to expression, expressed in vulval epithelial cells and neurons.

The protein resides in the golgi apparatus. The protein localises to the golgi stack membrane. It is found in the trans-Golgi network membrane. It localises to the cytoplasm. Its subcellular location is the synapse. The protein resides in the perikaryon. Functionally, required specifically for the determination of 3 vulval precursor cell fates P5.p, P6.p and P7.p during late second and early third larval stages; required for basolateral localization of receptor tyrosine kinase let-23. Could have a general but redundant role in development, functioning in diverse cell lineages to control cell fates. Regulates the trafficking of the glr-1 subunit of AMPA-type glutamate receptors (AMPRs) in the ventral nerve cord. This may be partly through interacting with the small GTPase rab-6.2 in its active GTP-bound state. This Caenorhabditis elegans protein is Protein lin-10.